The chain runs to 156 residues: ATP synthase subunit b (156 aa).

The helical transmembrane segment at 7 to 27 (LFVQAIVFAILVWFTMKFVWP) threads the bilayer.

The protein belongs to the ATPase B chain family. In terms of assembly, F-type ATPases have 2 components, F(1) - the catalytic core - and F(0) - the membrane proton channel. F(1) has five subunits: alpha(3), beta(3), gamma(1), delta(1), epsilon(1). F(0) has three main subunits: a(1), b(2) and c(10-14). The alpha and beta chains form an alternating ring which encloses part of the gamma chain. F(1) is attached to F(0) by a central stalk formed by the gamma and epsilon chains, while a peripheral stalk is formed by the delta and b chains.

It is found in the cell inner membrane. In terms of biological role, f(1)F(0) ATP synthase produces ATP from ADP in the presence of a proton or sodium gradient. F-type ATPases consist of two structural domains, F(1) containing the extramembraneous catalytic core and F(0) containing the membrane proton channel, linked together by a central stalk and a peripheral stalk. During catalysis, ATP synthesis in the catalytic domain of F(1) is coupled via a rotary mechanism of the central stalk subunits to proton translocation. Functionally, component of the F(0) channel, it forms part of the peripheral stalk, linking F(1) to F(0). The polypeptide is ATP synthase subunit b (Polaromonas sp. (strain JS666 / ATCC BAA-500)).